The sequence spans 509 residues: Lysophospholipid acyltransferase (509 aa).

At Met1–Ser14 the chain is on the lumenal side. Residues Phe15 to Phe35 form a helical membrane-spanning segment. The Cytoplasmic portion of the chain corresponds to Ala36–Ser55. The helical transmembrane segment at Ile56 to Phe76 threads the bilayer. Topologically, residues Asp77 to Pro94 are lumenal. A helical transmembrane segment spans residues Trp95–Tyr115. Residues Pro116–Arg223 are Cytoplasmic-facing. Residues Gly224–Leu244 form a helical membrane-spanning segment. Residues Thr245–Pro246 are Lumenal-facing. Residues Lys247–Ala267 traverse the membrane as a helical segment. Topologically, residues Arg268–Asp410 are cytoplasmic. Residue His363 is part of the active site. Residues Val411 to Leu431 form a helical membrane-spanning segment. Over Asn432–Lys441 the chain is Lumenal. Residues Glu442 to Ile462 traverse the membrane as a helical segment. The Cytoplasmic segment spans residues Arg463 to Glu509. A disordered region spans residues Ser488–Glu509. Position 490 is a phosphoserine (Ser490). Over residues Pro500–Glu509 the composition is skewed to basic and acidic residues.

It belongs to the membrane-bound acyltransferase family.

It localises to the endoplasmic reticulum membrane. Its subcellular location is the microsome membrane. The catalysed reaction is a 1-acyl-sn-glycero-3-phosphate + an acyl-CoA = a 1,2-diacyl-sn-glycero-3-phosphate + CoA. The enzyme catalyses a 1-acyl-sn-glycero-3-phosphocholine + an acyl-CoA = a 1,2-diacyl-sn-glycero-3-phosphocholine + CoA. It carries out the reaction a 1-acyl-sn-glycero-3-phosphoethanolamine + an acyl-CoA = a 1,2-diacyl-sn-glycero-3-phosphoethanolamine + CoA. In terms of biological role, membrane-bound O-acyltransferase that mediates the incorporation of unsaturated acyl chains into the sn-2 position of phospholipids. This Schizosaccharomyces pombe (strain 972 / ATCC 24843) (Fission yeast) protein is Lysophospholipid acyltransferase (ale1).